We begin with the raw amino-acid sequence, 753 residues long: Probable tubulin--tyrosine ligase PBY1 (753 aa).

One can recognise a TTL domain in the interval 343 to 734 (MEYIYKPLTH…PIFNENRNKT (392 aa)).

The protein belongs to the tubulin--tyrosine ligase family. It depends on Mg(2+) as a cofactor. The cofactor is K(+).

The protein resides in the cytoplasm. Its subcellular location is the P-body. It carries out the reaction C-terminal L-alpha-aminoacyl-L-glutamyl-L-glutamyl-[tubulin] + L-tyrosine + ATP = C-terminal L-alpha-aminoacyl-L-glutamyl-L-glutamyl-L-tyrosyl-[tubulin] + ADP + phosphate + H(+). Probable P-body-associated tubulin--tyrosine ligase. The protein is Probable tubulin--tyrosine ligase PBY1 (PBY1) of Saccharomyces cerevisiae (strain ATCC 204508 / S288c) (Baker's yeast).